A 259-amino-acid polypeptide reads, in one-letter code: Phosphatidylglycerol--prolipoprotein diacylglyceryl transferase (259 aa).

The next 4 membrane-spanning stretches (helical) occupy residues Ile-9–Ile-29, Phe-55–Tyr-75, Glu-92–Cys-112, and Ile-117–Gly-137. Arg-138 is a binding site for a 1,2-diacyl-sn-glycero-3-phospho-(1'-sn-glycerol). A run of 3 helical transmembrane segments spans residues Gln-172 to Phe-192, Gly-201 to Phe-221, and Ile-228 to Leu-248.

Belongs to the Lgt family.

Its subcellular location is the cell inner membrane. It carries out the reaction L-cysteinyl-[prolipoprotein] + a 1,2-diacyl-sn-glycero-3-phospho-(1'-sn-glycerol) = an S-1,2-diacyl-sn-glyceryl-L-cysteinyl-[prolipoprotein] + sn-glycerol 1-phosphate + H(+). It functions in the pathway protein modification; lipoprotein biosynthesis (diacylglyceryl transfer). Functionally, catalyzes the transfer of the diacylglyceryl group from phosphatidylglycerol to the sulfhydryl group of the N-terminal cysteine of a prolipoprotein, the first step in the formation of mature lipoproteins. This Rickettsia typhi (strain ATCC VR-144 / Wilmington) protein is Phosphatidylglycerol--prolipoprotein diacylglyceryl transferase.